The following is an 850-amino-acid chain: Coiled-coil and C2 domain-containing protein 1B (850 aa).

Over residues 1 to 10 (MPGPRPRKGP) the composition is skewed to basic residues. 3 disordered regions span residues 1–21 (MPGP…ETAK), 54–73 (LTGE…RAPL), and 114–145 (GVDE…EQPV). Positions 114-129 (GVDEETGLVDDSEETS) are enriched in acidic residues. The stretch at 167-213 (LQALLEERIQNYREAAASAKEAGEAAKARRCERGLKTLESQLATVRK) forms a coiled coil. Disordered stretches follow at residues 215-277 (GKIC…SDPD) and 436-525 (FAEL…SPSV). A compositionally biased stretch (basic and acidic residues) spans 234–244 (AHQERPSKDSE). Residues 440–450 (PVPPGFPPIPG) are compositionally biased toward pro residues. Low complexity-rich tracts occupy residues 489–502 (PAQA…AQPL) and 511–524 (EPKA…LSPS). Serine 585 carries the post-translational modification Phosphoserine. The residue at position 588 (threonine 588) is a Phosphothreonine. The C2 domain occupies 668 to 807 (DPPSHHFELK…EKECEIREIM (140 aa)).

As to quaternary structure, interacts with CHMP4B. In terms of tissue distribution, expressed in epididymal sperm but not in testicular sperm (at protein level).

It localises to the nucleus. Transcription factor that binds specifically to the DRE (dual repressor element) and represses HTR1A gene transcription in neuronal cells. The sequence is that of Coiled-coil and C2 domain-containing protein 1B (Cc2d1b) from Rattus norvegicus (Rat).